The primary structure comprises 249 residues: 5'-nucleotidase SurE (249 aa).

A divalent metal cation-binding residues include D8, D9, S39, and N91.

This sequence belongs to the SurE nucleotidase family. The cofactor is a divalent metal cation.

It localises to the cytoplasm. The enzyme catalyses a ribonucleoside 5'-phosphate + H2O = a ribonucleoside + phosphate. In terms of biological role, nucleotidase that shows phosphatase activity on nucleoside 5'-monophosphates. In Pseudomonas paraeruginosa (strain DSM 24068 / PA7) (Pseudomonas aeruginosa (strain PA7)), this protein is 5'-nucleotidase SurE.